The chain runs to 135 residues: uncharacterized protein (135 aa).

A helical transmembrane segment spans residues 35–55; the sequence is VVLVLIGATIILVVISVLVVS.

It localises to the membrane. This is an uncharacterized protein from Saccharomyces cerevisiae (strain ATCC 204508 / S288c) (Baker's yeast).